A 432-amino-acid chain; its full sequence is MAEAEVKDNEVYEEDLVDYEEEVENGTDGGANAANASADVVKKGYVGIHSSGFRDFLLKPELLRAIQDCGFEHPSEVQHECIPQAILGMDVICQAKSGMGKTAVFVLSSLQQIDPVAGQVGALVLCHTRELAYQICHEFERFSKYLPEVKVAVFYGGVHIKKHKDLLKNDCPHIVVGTPGRILALAREKDLSLKNVRHFILDECDKMLDSLDMRRDVQEIFKMTPHDKQVMMFSATLSKEIRPVCKKFMQDPMEIYVDDEAKLTLHGLVQHYIKLSEAEKNRKLNDLLDALDFNQVVIFVKSVSRAAELNKLLCECNFPAISIHSGMTQEERLTRYKNFKEGHKRILVATDLVGRGIDIERVNIVINYDMPDSADSYLHRVGRAGRFGTKGLAITFVSSASDSDVLNQVQERFEVDIKELPEQIDTSTYMPS.

A coiled-coil region spans residues Met1–Asp28. A Q motif motif is present at residues Ser51–His79. Residues Ile82–Ile255 enclose the Helicase ATP-binding domain. Ala95–Thr102 is an ATP binding site. Residues Asp202–Asp205 carry the DEAD box motif. The Helicase C-terminal domain occupies Lys283 to Thr428.

It belongs to the DEAD box helicase family. DECD subfamily. In terms of assembly, homodimer and heterodimer with AIP2. Interacts with API5.

The protein localises to the nucleus. The enzyme catalyses ATP + H2O = ADP + phosphate + H(+). Functionally, ATP-binding RNA helicase involved in pre-mRNA splicing. Required for the export of mRNA out of the nucleus. Required for tapetal programmed cell death (PCD) and degeneration during anther development. Forms dimer with AIP2 and binds the promoter region of the cysteine protease CP1. Can complement the yeast RNA helicase SUB2. Plants silencing AIP1 and AIP2 are male sterile. This is DEAD-box ATP-dependent RNA helicase 56 from Oryza sativa subsp. japonica (Rice).